Consider the following 422-residue polypeptide: Lactose-binding protein (422 aa).

Positions 1–28 (MDYSRLLKRSVSAALTAAALLCSTAAFA) are cleaved as a signal peptide. The tract at residues 246 to 277 (SNDGIRALTSGDVASVLRGVWITGTVKSQPDQ) is lactose-binding.

It belongs to the bacterial solute-binding protein 1 family.

The protein resides in the periplasm. Its function is as follows. Part of the binding-protein-dependent transport system for lactose. This is Lactose-binding protein (lacE) from Rhizobium radiobacter (Agrobacterium tumefaciens).